We begin with the raw amino-acid sequence, 195 residues long: Imidazoleglycerol-phosphate dehydratase (195 aa).

This sequence belongs to the imidazoleglycerol-phosphate dehydratase family.

Its subcellular location is the cytoplasm. It carries out the reaction D-erythro-1-(imidazol-4-yl)glycerol 3-phosphate = 3-(imidazol-4-yl)-2-oxopropyl phosphate + H2O. The protein operates within amino-acid biosynthesis; L-histidine biosynthesis; L-histidine from 5-phospho-alpha-D-ribose 1-diphosphate: step 6/9. This Polynucleobacter asymbioticus (strain DSM 18221 / CIP 109841 / QLW-P1DMWA-1) (Polynucleobacter necessarius subsp. asymbioticus) protein is Imidazoleglycerol-phosphate dehydratase.